Consider the following 117-residue polypeptide: Prefoldin subunit beta (117 aa).

It belongs to the prefoldin subunit beta family. Heterohexamer of two alpha and four beta subunits.

The protein resides in the cytoplasm. Functionally, molecular chaperone capable of stabilizing a range of proteins. Seems to fulfill an ATP-independent, HSP70-like function in archaeal de novo protein folding. This Methanosarcina acetivorans (strain ATCC 35395 / DSM 2834 / JCM 12185 / C2A) protein is Prefoldin subunit beta (pfdB).